We begin with the raw amino-acid sequence, 855 residues long: Homeobox-leucine zipper protein HOX33 (855 aa).

Residues 1–21 (MAAAAVGGRGERLSSSSPTAA) are disordered. A DNA-binding region (homeobox) is located at residues 26 to 89 (DAGKYVRYTP…NRRCREKQRK (64 aa)). Residues 84-126 (REKQRKEASRLQTVNRKLNAMNKLLMEENDRLQKQVSRLVYEN) are a coiled coil. Residues 168-390 (DANNPAGLLA…LRHIRQIAHE (223 aa)) form the START domain.

The protein belongs to the HD-ZIP homeobox family. Class III subfamily. As to expression, expressed in seedlings, roots, stems, leaf sheaths and blades and panicles.

It is found in the nucleus. Probable transcription factor. The chain is Homeobox-leucine zipper protein HOX33 (HOX33) from Oryza sativa subsp. indica (Rice).